A 915-amino-acid chain; its full sequence is Protein MEI2-like 1 (915 aa).

Positions 1 to 90 (MPSDIMEQRG…NTTNGSQWES (90 aa)) are disordered. The span at 16-25 (HFHEDIHITS) shows a compositional bias: basic and acidic residues. The segment covering 50-65 (MPKSSWTSESYQLKPQ) has biased composition (polar residues). A compositionally biased stretch (low complexity) spans 66 to 77 (SSFSGSHPSGSP). Position 76 is a phosphoserine (serine 76). Over residues 78–89 (NARNTTNGSQWE) the composition is skewed to polar residues. 2 consecutive RRM domains span residues 217–290 (RTLL…YSIS) and 302–375 (GALL…PTYP). Disordered stretches follow at residues 690-723 (PGRSPMGSMPGSFDSPNERYRNLSHRRSESSSSN) and 854-915 (LFHT…LKEN). Residues 705-723 (PNERYRNLSHRRSESSSSN) are compositionally biased toward basic and acidic residues. A compositionally biased stretch (polar residues) spans 882–898 (RSSSIDNYNSFSISSVS).

As to expression, expressed in roots, shoots, leaves, flowers and siliques.

Functionally, probable RNA-binding transcriptional activator that plays a role in meiosis and vegetative growth. May be a downstream effector of TOR signaling pathway and recruited by RAPTOR1 for TOR substrate. This chain is Protein MEI2-like 1 (ML1), found in Arabidopsis thaliana (Mouse-ear cress).